The chain runs to 386 residues: Bifunctional enzyme IspD/IspF (386 aa).

The 2-C-methyl-D-erythritol 4-phosphate cytidylyltransferase stretch occupies residues 1-230 (MIRDERVAAI…RARSILEAPV (230 aa)). The interval 231–386 (AMGVGYDTHR…HAVALLVRVR (156 aa)) is 2-C-methyl-D-erythritol 2,4-cyclodiphosphate synthase. Residues aspartate 237 and histidine 239 each coordinate a divalent metal cation. 4-CDP-2-C-methyl-D-erythritol 2-phosphate is bound by residues 237-239 (DTH) and 262-263 (HS). A divalent metal cation is bound at residue histidine 270. Residues 284-286 (DLG), 289-293 (FPDTD), 360-363 (TTGE), phenylalanine 367, and arginine 370 each bind 4-CDP-2-C-methyl-D-erythritol 2-phosphate.

In the N-terminal section; belongs to the IspD/TarI cytidylyltransferase family. IspD subfamily. The protein in the C-terminal section; belongs to the IspF family. The cofactor is a divalent metal cation.

It carries out the reaction 2-C-methyl-D-erythritol 4-phosphate + CTP + H(+) = 4-CDP-2-C-methyl-D-erythritol + diphosphate. The catalysed reaction is 4-CDP-2-C-methyl-D-erythritol 2-phosphate = 2-C-methyl-D-erythritol 2,4-cyclic diphosphate + CMP. It participates in isoprenoid biosynthesis; isopentenyl diphosphate biosynthesis via DXP pathway; isopentenyl diphosphate from 1-deoxy-D-xylulose 5-phosphate: step 2/6. It functions in the pathway isoprenoid biosynthesis; isopentenyl diphosphate biosynthesis via DXP pathway; isopentenyl diphosphate from 1-deoxy-D-xylulose 5-phosphate: step 4/6. Functionally, bifunctional enzyme that catalyzes the formation of 4-diphosphocytidyl-2-C-methyl-D-erythritol from CTP and 2-C-methyl-D-erythritol 4-phosphate (MEP) (IspD), and catalyzes the conversion of 4-diphosphocytidyl-2-C-methyl-D-erythritol 2-phosphate (CDP-ME2P) to 2-C-methyl-D-erythritol 2,4-cyclodiphosphate (ME-CPP) with a corresponding release of cytidine 5-monophosphate (CMP) (IspF). This is Bifunctional enzyme IspD/IspF from Anaeromyxobacter sp. (strain Fw109-5).